We begin with the raw amino-acid sequence, 527 residues long: Cytochrome P450 monooxyhenase eriA (527 aa).

Residues 17–37 (LGVVDLSLLGVGAVIAFAWLF) traverse the membrane as a helical segment. N-linked (GlcNAc...) asparagine glycans are attached at residues Asn77, Asn274, and Asn297. Position 453 (Cys453) interacts with heme.

This sequence belongs to the cytochrome P450 family. Heme is required as a cofactor.

The protein localises to the membrane. The enzyme catalyses cyathadiol + reduced [NADPH--hemoprotein reductase] + O2 = cyathatriol + oxidized [NADPH--hemoprotein reductase] + H2O + H(+). Its pathway is secondary metabolite biosynthesis. Its function is as follows. Cytochrome P450 monooxygenase; part of the gene cluster that mediates the biosynthesis of erinacines, cyathane-xylosides that show unique biological activities, including leishmanicidal activity, stimulating activity for nerve growth-factor synthesis, and agonistic activity toward the kappa opioid receptor. Within the pathway, eriA catalyzes C-11 hydroxylation in the presence of the short chain dehydrogenase/reductase (SDR) eriH, which leads to the production of cyathatriol. The first step of the erinacines biosynthesis pathway is catalyzed by the geranylgeranyl diphosphate (GGPP) synthase eriE via conversion of farnesyl pyrophosphate and isopentyl pyrophosphate into geranylgeranyl pyrophosphate (GGPP). GGPP is then substrate of the diterpene cyclase eriG for the production of cyatha-3,12-diene. The cytochrome P450 monooxygenase eriI then hydroxylates cyatha-3,12-diene at C-14 of the seven-membered ring to produce erinacol, which is further hydroxylated at C-15 by the cytochrome P450 monooxygenase eriC to yield cyathadiol. The cytochrome P450 monooxygenase eriA then catalyzes C-11 hydroxylation in the presence of the short chain dehydrogenase/reductase (SDR) eriH, which leads to the production of cyathatriol. The acetyltransferase eriL converts cyathatriol into 11-O-acetyl-cyathatriol. The SDR eriH catalyzes further oxidation of 11-O-acetyl-cyathatriol into 1-O-acetylcyathin A3. Finally, the glycosyl transferase eriJ tranfers xylose from UDP-xylose onto C-14 of 11-O-acetyl-cyathatriol to form eracine Q. EriJ is also able to convert 11-O-acetyl-cyathatriol to eracine Q2 by using UDP-D-glucose as cosubstrate, but at a lower rate. This chain is Cytochrome P450 monooxyhenase eriA, found in Hericium erinaceus (Lion's mane mushroom).